We begin with the raw amino-acid sequence, 462 residues long: tRNA-2-methylthio-N(6)-dimethylallyladenosine synthase (462 aa).

Residues 18–138 form the MTTase N-terminal domain; that stretch reads RKVFVKTYGC…LPNALARVRS (121 aa). Positions 27, 63, 101, 179, 183, and 186 each coordinate [4Fe-4S] cluster. A Radical SAM core domain is found at 165–397; sequence RKRGVSAFLT…QALLSEQQYA (233 aa). The 63-residue stretch at 400-462 folds into the TRAM domain; sequence DSMIGREMDV…TNSLIAQKLA (63 aa).

The protein belongs to the methylthiotransferase family. MiaB subfamily. As to quaternary structure, monomer. The cofactor is [4Fe-4S] cluster.

The protein localises to the cytoplasm. The enzyme catalyses N(6)-dimethylallyladenosine(37) in tRNA + (sulfur carrier)-SH + AH2 + 2 S-adenosyl-L-methionine = 2-methylsulfanyl-N(6)-dimethylallyladenosine(37) in tRNA + (sulfur carrier)-H + 5'-deoxyadenosine + L-methionine + A + S-adenosyl-L-homocysteine + 2 H(+). Functionally, catalyzes the methylthiolation of N6-(dimethylallyl)adenosine (i(6)A), leading to the formation of 2-methylthio-N6-(dimethylallyl)adenosine (ms(2)i(6)A) at position 37 in tRNAs that read codons beginning with uridine. The chain is tRNA-2-methylthio-N(6)-dimethylallyladenosine synthase from Brucella anthropi (strain ATCC 49188 / DSM 6882 / CCUG 24695 / JCM 21032 / LMG 3331 / NBRC 15819 / NCTC 12168 / Alc 37) (Ochrobactrum anthropi).